Here is a 259-residue protein sequence, read N- to C-terminus: Small ribosomal subunit protein mS23 (259 aa).

The protein belongs to the mitochondrion-specific ribosomal protein mS23 family. Component of the mitochondrial small ribosomal subunit.

Its subcellular location is the mitochondrion. The protein is Small ribosomal subunit protein mS23 (RSM25) of Pyricularia oryzae (strain 70-15 / ATCC MYA-4617 / FGSC 8958) (Rice blast fungus).